A 603-amino-acid chain; its full sequence is Rab proteins geranylgeranyltransferase component A (603 aa).

At serine 470 the chain carries Phosphoserine.

This sequence belongs to the Rab GDI family.

Its function is as follows. Substrate-binding subunit (component A) of the Rab geranylgeranyltransferase (GGTase) complex. Binds unprenylated Rab proteins and presents the substrate peptide to the catalytic component B. The component A is thought to be regenerated by transferring its prenylated Rab back to the donor membrane. This chain is Rab proteins geranylgeranyltransferase component A (MRS6), found in Saccharomyces cerevisiae (strain ATCC 204508 / S288c) (Baker's yeast).